The primary structure comprises 223 residues: UPF0502 protein Avin_04790 (223 aa).

The protein belongs to the UPF0502 family.

This chain is UPF0502 protein Avin_04790, found in Azotobacter vinelandii (strain DJ / ATCC BAA-1303).